The following is a 334-amino-acid chain: D-fructose 1,6-bisphosphatase class 2/sedoheptulose 1,7-bisphosphatase (334 aa).

Mn(2+) contacts are provided by D33, E57, D85, and E88. Residues 88–90 (EGT), Y119, 164–166 (RAR), and 186–188 (DGD) contribute to the substrate site. E213 contributes to the Mn(2+) binding site.

It belongs to the FBPase class 2 family. Homotetramer. Mn(2+) serves as cofactor.

It catalyses the reaction beta-D-fructose 1,6-bisphosphate + H2O = beta-D-fructose 6-phosphate + phosphate. It carries out the reaction D-sedoheptulose 1,7-bisphosphate + H2O = D-sedoheptulose 7-phosphate + phosphate. It participates in carbohydrate biosynthesis; Calvin cycle. Catalyzes the hydrolysis of fructose 1,6-bisphosphate (Fru 1,6-P2) and sedoheptulose 1,7-bisphosphate (Sed 1,7-P2) to fructose 6-phosphate and sedoheptulose 7-phosphate, respectively. The sequence is that of D-fructose 1,6-bisphosphatase class 2/sedoheptulose 1,7-bisphosphatase from Parasynechococcus marenigrum (strain WH8102).